The sequence spans 254 residues: U3 small nucleolar RNA-associated protein NOL7 (254 aa).

Residues 1–90 are disordered; that stretch reads MVQLRPRLSR…ASARRDKTLL (90 aa). Composition is skewed to acidic residues over residues 18–31 and 48–61; these read MVDE…EEEA and PLDE…EAPE. Residues 71-90 show a composition bias toward basic and acidic residues; it reads EAREEELRVRASARRDKTLL. Lys127 participates in a covalent cross-link: Glycyl lysine isopeptide (Lys-Gly) (interchain with G-Cter in SUMO2). Ser129 carries the post-translational modification Phosphoserine. Residue Lys157 forms a Glycyl lysine isopeptide (Lys-Gly) (interchain with G-Cter in SUMO2) linkage. Positions 235–254 are disordered; that stretch reads NAKRFKKRWMAKKMKKKTYK.

The protein belongs to the UTP16 family. In terms of assembly, part of the small subunit (SSU) processome, composed of more than 70 proteins and the RNA chaperone small nucleolar RNA (snoRNA) U3.

Its subcellular location is the nucleus. It is found in the nucleolus. Functionally, functions as part of the small subunit (SSU) processome, first precursor of the small eukaryotic ribosomal subunit that coordinates the first two steps of ribosome biogenesis in transcription of the primary transcript pre-RNA and pre-18S processing. During the assembly of the SSU processome in the nucleolus, many ribosome biogenesis factors, an RNA chaperone and ribosomal proteins associate with the nascent pre-rRNA and work in concert to generate RNA folding, modifications, rearrangements and cleavage as well as targeted degradation of pre-ribosomal RNA by the RNA exosome. This subunit is required for processing of the 5'-external transcribed spacer sequence (5'ETS) of the primary transcript pre-rRNA to yield the 18S rRNA. Also plays a role in maintaining early pre-rRNA levels, either by assisting in its transcription or stability. The chain is U3 small nucleolar RNA-associated protein NOL7 (Nol7) from Mus musculus (Mouse).